The primary structure comprises 479 residues: 3-isopropylmalate dehydratase large subunit (479 aa).

The [4Fe-4S] cluster site is built by C353, C414, and C417.

The protein belongs to the aconitase/IPM isomerase family. LeuC type 1 subfamily. In terms of assembly, heterodimer of LeuC and LeuD. [4Fe-4S] cluster serves as cofactor.

It carries out the reaction (2R,3S)-3-isopropylmalate = (2S)-2-isopropylmalate. Its pathway is amino-acid biosynthesis; L-leucine biosynthesis; L-leucine from 3-methyl-2-oxobutanoate: step 2/4. In terms of biological role, catalyzes the isomerization between 2-isopropylmalate and 3-isopropylmalate, via the formation of 2-isopropylmaleate. The sequence is that of 3-isopropylmalate dehydratase large subunit from Xanthomonas campestris pv. campestris (strain 8004).